The sequence spans 488 residues: Germacrene A hydroxylase (488 aa).

At 1 to 6 (MELSLT) the chain is on the cytoplasmic side. Residues 7–23 (TSIALATIVLILYKLAT) form a helical; Signal-anchor for type II membrane protein membrane-spanning segment. Topologically, residues 24–488 (RPKSNKKRLP…KTELILVPSF (465 aa)) are lumenal. 2 N-linked (GlcNAc...) asparagine glycosylation sites follow: Asn-260 and Asn-379. Cys-432 contacts heme.

It belongs to the cytochrome P450 family. Heme is required as a cofactor.

The protein localises to the endoplasmic reticulum membrane. It is found in the microsome membrane. The catalysed reaction is (+)-(R)-germacrene A + 3 reduced [NADPH--hemoprotein reductase] + 3 O2 = germacra-1(10),4,11(13)-trien-12-oate + 3 oxidized [NADPH--hemoprotein reductase] + 4 H2O + 4 H(+). It participates in secondary metabolite biosynthesis; terpenoid biosynthesis. Its activity is regulated as follows. Inhibited by cytochrome C, miconazole, aminobenzotriazole, metyrapone and clotrimazole. In terms of biological role, involved in the biosynthesis of germacrene-derived sesquiterpene lactones. Catalyzes three consecutive oxidations of germacrene A to produce germacrene A acid. Could also catalyze the three-step oxidation of non-natural substrate amorphadiene to artemisinic acid. Can use beta-elemene as substrate. The sequence is that of Germacrene A hydroxylase from Cichorium intybus (Chicory).